The following is a 348-amino-acid chain: Lysophosphatidic acid receptor 2 (348 aa).

Topologically, residues 1 to 30 (MGQCYYNETIGFFYNNSGKELSSHWRPKDV) are extracellular. Residues Asn7 and Asn15 are each glycosylated (N-linked (GlcNAc...) asparagine). The helical transmembrane segment at 31-51 (VVVALGLTVSVLVLLTNLLVI) threads the bilayer. The Cytoplasmic portion of the chain corresponds to 52–66 (AAIASNRRFHQPIYY). A helical transmembrane segment spans residues 67–87 (LLGNLAAADLFAGVAYLFLMF). Topologically, residues 88–100 (HTGPRTARLSLEG) are extracellular. The chain crosses the membrane as a helical span at residues 101 to 123 (WFLRQGLLDTSLTASVATLLAIA). At 124-143 (VERHRSVMAVQLHSRLPRGR) the chain is on the cytoplasmic side. Residues 144-164 (VVMLIVGVWVAALGLGLLPAH) traverse the membrane as a helical segment. Topologically, residues 165 to 185 (SWHCLCALDRCSRMAPLLSRS) are extracellular. The chain crosses the membrane as a helical span at residues 186–206 (YLAVWALSSLLVFLLMVAVYT). The Cytoplasmic portion of the chain corresponds to 207–239 (RIFFYVRRRVQRMAEHVSCHPRYRETTLSLVKT). Residues 240 to 260 (VVIILGAFVVCWTPGQVVLLL) traverse the membrane as a helical segment. Residues 261 to 276 (DGLGCESCNVLAVEKY) lie on the Extracellular side of the membrane. Residues 277–294 (FLLLAEANSLVNAAVYSC) traverse the membrane as a helical segment. At 295–348 (RDAEMRRTFRRLLCCACLRQSTRESVHYTSSAQGGASTRIMLPENGHPLMDSTL) the chain is on the cytoplasmic side. Cys308 carries the S-palmitoyl cysteine lipid modification. The PDZ-binding signature appears at 345 to 348 (DSTL).

Belongs to the G-protein coupled receptor 1 family. In terms of assembly, interacts with SLC9A3R2/NHERF2, MAGI3 and PLCB3. Interacts with RALA and GRK2. In terms of tissue distribution, expressed most abundantly in testes and peripheral blood leukocytes with less expression in pancreas, spleen, thymus and prostate. Little or no expression in heart, brain, placenta, lung, liver, skeletal muscle, kidney, ovary, small intestine, or colon.

The protein resides in the cell surface. The protein localises to the cell membrane. In terms of biological role, receptor for lysophosphatidic acid (LPA), a mediator of diverse cellular activities. Seems to be coupled to the G(i)/G(o), G(12)/G(13), and G(q) families of heteromeric G proteins. Plays a key role in phospholipase C-beta (PLC-beta) signaling pathway. Stimulates phospholipase C (PLC) activity in a manner that is independent of RALA activation. The chain is Lysophosphatidic acid receptor 2 from Homo sapiens (Human).